A 354-amino-acid chain; its full sequence is Probable L-ascorbate-6-phosphate lactonase UlaG (354 aa).

Belongs to the UlaG family. Requires a divalent metal cation as cofactor.

It localises to the cytoplasm. It carries out the reaction L-ascorbate 6-phosphate + H2O = 3-dehydro-L-gulonate 6-phosphate. Its pathway is cofactor degradation; L-ascorbate degradation; D-xylulose 5-phosphate from L-ascorbate: step 1/4. In terms of biological role, probably catalyzes the hydrolysis of L-ascorbate-6-P into 3-keto-L-gulonate-6-P. Is essential for L-ascorbate utilization under anaerobic conditions. This is Probable L-ascorbate-6-phosphate lactonase UlaG from Escherichia coli O139:H28 (strain E24377A / ETEC).